A 136-amino-acid chain; its full sequence is ATP synthase epsilon chain (136 aa).

Positions 95–115 are disordered; that stretch reads DFSEAQSRLEEANKGSDRREQ. Positions 101–115 are enriched in basic and acidic residues; that stretch reads SRLEEANKGSDRREQ.

It belongs to the ATPase epsilon chain family. F-type ATPases have 2 components, CF(1) - the catalytic core - and CF(0) - the membrane proton channel. CF(1) has five subunits: alpha(3), beta(3), gamma(1), delta(1), epsilon(1). CF(0) has three main subunits: a, b and c.

The protein localises to the cellular thylakoid membrane. In terms of biological role, produces ATP from ADP in the presence of a proton gradient across the membrane. The protein is ATP synthase epsilon chain of Rippkaea orientalis (strain PCC 8801 / RF-1) (Cyanothece sp. (strain PCC 8801)).